A 215-amino-acid chain; its full sequence is Nascent polypeptide-associated complex subunit alpha (215 aa).

Positions 1-81 (MPGEATETVP…SEKKARKAMS (81 aa)) are disordered. The span at 9 to 28 (VPATEQELPQPQAETGSGTE) shows a compositional bias: polar residues. Over residues 29 to 40 (SDSDESVPELEG) the composition is skewed to acidic residues. Position 43 is a phosphoserine; by ILK1 (S43). Positions 44–57 (TQATTQQAQLAAAA) are enriched in low complexity. Residues 69-80 (QSRSEKKARKAM) are required for DNA-binding. The region spanning 70–135 (SRSEKKARKA…AKIEDLSQQA (66 aa)) is the NAC-A/B domain. Residues 93 to 108 (RVTIRKSKNILFVITK) are RNA/DNA-binding. S132 carries the phosphoserine modification. Position 142 is an N6-acetyllysine; alternate (K142). K142 is covalently cross-linked (Glycyl lysine isopeptide (Lys-Gly) (interchain with G-Cter in SUMO2); alternate). T159 is subject to Phosphothreonine; by GSK3-beta. T161 carries the post-translational modification Phosphothreonine. S166, S186, S191, and S203 each carry phosphoserine. Residues 176-213 (VEVKDIEWVMSQANVSRAKAVRALKNNSNNIVNAIMEL) form the UBA domain.

It belongs to the NAC-alpha family. As to quaternary structure, part of the nascent polypeptide-associated complex (NAC), which is a heterodimer of NACA and BTF3 (via NAC-A/B domains). NAC associates with ribosomes through the BTF3/NACB subunit and contacts the ribosomal protein L23, which is positioned near the exiting site. Both subunits can contact nascent polypeptide chains. NACA may also form homodimers, and only this form binds DNA. Interacts with TBP and JUN. Phosphorylation of Ser-43 by ILK during cell adhesion may promote nuclear localization. Phosphorylation of Thr-159 by GSK3B may promote proteasome mediated degradation.

The protein resides in the cytoplasm. It localises to the nucleus. Its function is as follows. Prevents inappropriate targeting of non-secretory polypeptides to the endoplasmic reticulum (ER). Binds to nascent polypeptide chains as they emerge from the ribosome and blocks their interaction with the signal recognition particle (SRP), which normally targets nascent secretory peptides to the ER. Also reduces the inherent affinity of ribosomes for protein translocation sites in the ER membrane (M sites). May act as a specific coactivator for JUN, binding to DNA and stabilizing the interaction of JUN homodimers with target gene promoters. The polypeptide is Nascent polypeptide-associated complex subunit alpha (Chinchilla lanigera (Long-tailed chinchilla)).